Reading from the N-terminus, the 51-residue chain is uncharacterized protein (51 aa).

The stretch at 3 to 30 (EEKAVSLAKEIIELDIKRDEMLETFMQL) forms a coiled coil.

This is an uncharacterized protein from Bacillus subtilis (strain 168).